A 450-amino-acid polypeptide reads, in one-letter code: Sensor histidine kinase EnvZ (450 aa).

The Cytoplasmic portion of the chain corresponds to 1–15 (MRRLRFSPRSSFART). Residues 16–35 (LLLIVTLLFASLVTTYLVVL) traverse the membrane as a helical segment. Topologically, residues 36 to 158 (NFAILPSLQQ…LTEIHQGDFS (123 aa)) are periplasmic. The short motif at 71–75 (VVPPA) is the polyP-periplasmic motif element. Residues 159 to 179 (PLFRYTLAIMLLAIGGAWLFI) traverse the membrane as a helical segment. An HAMP domain is found at 180-232 (RIQNRPLVDLEHAALQVGKGIIPPPLREYGASEVRSVTRAFNHMAAGVKQLAD). The Cytoplasmic portion of the chain corresponds to 180–450 (RIQNRPLVDL…TRAQGTTKEG (271 aa)). The polyP-cytoplasmic motif signature appears at 201 to 205 (IPPPL). The cytoplasmic dimerization domain (CDD), when dimerized forms osmosensitive core stretch occupies residues 223 to 289 (MAAGVKQLAD…IIEQFIDYLR (67 aa)). A Histidine kinase domain is found at 240–440 (GVSHDLRTPL…SIRAWLPVPV (201 aa)). Residues histidine 243, 347–351 (NAARY), aspartate 373, 392–393 (RG), and 402–406 (TGLGL) each bind ATP. Phosphohistidine; by autocatalysis is present on histidine 243.

As to quaternary structure, homodimer. Interacts with MzrA. In terms of processing, autophosphorylated. Incubation of isolated EnvZ C-terminal fragment (residues 180-450) with increasing levels of NaCl or sucrose increases its autophosphorylation.

It is found in the cell inner membrane. It carries out the reaction ATP + protein L-histidine = ADP + protein N-phospho-L-histidine.. Its activity is regulated as follows. Activity is modulated by MzrA. In the presence of 0.2 M NaCl, 2.0 mM sodium cholate (bile salts) decreases expression from the ompC promoter; how this is mediated is unknown. Autophosphorylation is inhibited by the angucycline antibiotic waldiomycin in a non-competitive manner; waldiomycin prevents dimerization of the cytoplasmic domain and autophosphorylation. In terms of biological role, member of the two-component regulatory system EnvZ/OmpR involved in osmoregulation (particularly of genes ompF and ompC) as well as other genes. EnvZ functions as a membrane-associated protein kinase that phosphorylates OmpR in response to environmental signals; at low osmolarity OmpR activates ompF transcription, while at high osmolarity it represses ompF and activates ompC transcription. Also dephosphorylates OmpR in the presence of ATP. The cytoplasmic dimerization domain (CDD) forms an osmosensitive core; increasing osmolarity stabilizes this segment (possibly by its contraction), enhancing the autophosphorylation rate and consequently, downstream phosphotransfer to OmpR and signaling. Autophosphorylation is greater when full-length EnvZ is reconstituted in a lipid environment, lipid-mediated allostery impacts the kinase function of EnvZ. Involved in acid stress response; this requires EnvZ but not OmpR phosphorylation, and suggests that EnvZ senses cytoplasmic acidic pH. The chain is Sensor histidine kinase EnvZ (envZ) from Escherichia coli (strain K12).